Here is a 3176-residue protein sequence, read N- to C-terminus: Large tegument protein deneddylase (3176 aa).

Over residues 1-12 the composition is skewed to polar residues; that stretch reads MSNGDWGQSQRP. The tract at residues 1 to 28 is disordered; sequence MSNGDWGQSQRPRGTGPMRGIRTMDVNA. Residues 1-268 are deubiquitination activity; that stretch reads MSNGDWGQSQ…YEANGSGFDL (268 aa). The Peptidase C76 domain occupies 41 to 258; sequence LGTASCNQAH…MLEHYGVYDF (218 aa). Active-site residues include C61, D193, and H195. The interval 319–342 is disordered; it reads PAARYSPAKTNSPPPSPASAAPAS. Tandem repeats lie at residues 335 to 339, 340 to 344, 345 to 349, 350 to 354, and 355 to 359. A 10 X 5 AA approximate repeats of P-A-S-A-A region spans residues 335 to 384; it reads PASAAPASAAPASAAPASAAPASAAQASVAPASVAPASAAPASAAPDSAA. A 6; approximate repeat occupies 360–364; the sequence is QASVA. The stretch at 365–369 is one 7; approximate repeat; that stretch reads PASVA. 2 repeat units span residues 370-374 and 375-379. Over residues 376–386 the composition is skewed to low complexity; it reads ASAAPDSAAPA. Disordered stretches follow at residues 376 to 683, 928 to 950, 1170 to 1193, 1435 to 1461, 2610 to 3008, and 3023 to 3043; these read ASAA…GSGL, LLSG…SIYR, APIS…TPPL, LMET…RARE, GLVS…PGAR, and TYTV…KMPK. Residues 380 to 384 form a 10; approximate repeat; that stretch reads PDSAA. The span at 457-488 shows a compositional bias: pro residues; the sequence is PRPPVPPHRPPSAARLPPPVIPIPHQSPPASP. Positions 519-546 are enriched in low complexity; sequence AAPSNPEIPLTTPSPSPTAAAAPTATTL. Pro residues predominate over residues 579–636; the sequence is APSPLLPQQQPPPSAAPAPSPLLPQQQPPPSAARAPSPLPPQQQPLPSATPAPPPAQQ. The segment at 581-611 is interaction with inner tegument protein; sequence SPLLPQQQPPPSAAPAPSPLLPQQQPPPSAA. The segment covering 1170 to 1182 has biased composition (low complexity); it reads APISPASPSATPA. A compositionally biased stretch (polar residues) spans 2619 to 2630; sequence SADNTPASSDRL. Positions 2643-2654 are enriched in low complexity; the sequence is EGSTTAESEASG. Positions 2738-2747 are enriched in pro residues; that stretch reads QPAPQQPPSS. Polar residues-rich tracts occupy residues 2761–2772 and 2811–2831; these read SPHSTPSTASGS and SAAS…SSQD. Positions 2839–2854 are enriched in basic and acidic residues; it reads MQREKKQQGGREEAAE. Low complexity-rich tracts occupy residues 2872–2886 and 2901–2912; these read APVV…ATPA and APALGSGLAAPA.

Belongs to the herpesviridae large tegument protein family. In terms of assembly, interacts with host CUL1 and CUL4A; these interactions inhibit the E3 ligase activity of cullins. Interacts with inner tegument protein. Interacts with capsid vertex specific component CVC2. Interacts with the major capsid protein/MCP. Interacts with host TRIM25 and YWHAZ.

It localises to the virion tegument. The protein resides in the host cytoplasm. Its subcellular location is the host nucleus. The enzyme catalyses Thiol-dependent hydrolysis of ester, thioester, amide, peptide and isopeptide bonds formed by the C-terminal Gly of ubiquitin (a 76-residue protein attached to proteins as an intracellular targeting signal).. In terms of biological role, large tegument protein that plays multiple roles in the viral cycle. During viral entry, remains associated with the capsid while most of the tegument is detached and participates in the capsid transport toward the host nucleus. Plays a role in the routing of the capsid at the nuclear pore complex and subsequent uncoating. Within the host nucleus, acts as a deneddylase and promotes the degradation of nuclear CRLs (cullin-RING ubiquitin ligases) and thereby stabilizes nuclear CRL substrates, while cytoplasmic CRLs remain unaffected. These modifications prevent host cell cycle S-phase progression and create a favorable environment allowing efficient viral genome replication. Participates later in the secondary envelopment of capsids. Indeed, plays a linker role for the association of the outer viral tegument to the capsids together with the inner tegument protein. Counteracts host TLR-mediated NF-kappa-B activation through both MYD88 and TICAM1-dependent pathways by interfering with 'Lys-63'- and 'Lys-48'-linked ubiquitination of signaling intermediates such as TRAF6 and IKBKG. Inhibits type I interferon production by forming a tri-molecular complex with host TRIM25 and 14-3-3 thereby promoting TRIM25 autoubiquitination and sequestration of the ligase into inactive protein aggregates. In turn, host RIGI is recruited to the complex but ubiquitination is severely impaired leading to inhibition of the pathway. Also catalyzes the removal of 'Lys-48'- and 'Lys-63'-linked ubiquitin chains on host TBK1 and STING1 suppressing cGAS-STING signaling in addition to the RIGI-MAVS pathway. Inhibits selective autophagy by deubiquitinating host SQSTM1. In turn, decreased SQSTM1 ubiquitination fails to recruit LC3 to SQSTM1-positive aggregates. In the host nucleus, deubiquitinates topoisomerase II subunits TOP2A and TOP2B thereby stabilizing SUMOylated TOP2 which halts the DNA damage response to TOP2-induced double strand DNA breaks and promotes cell survival. This is Large tegument protein deneddylase from Homo sapiens (Human).